The following is a 53-amino-acid chain: uncharacterized protein (53 aa).

The helical transmembrane segment at F4–Y24 threads the bilayer.

Its subcellular location is the host membrane. This is an uncharacterized protein from Acidianus bottle-shaped virus (isolate Italy/Pozzuoli) (ABV).